The following is a 600-amino-acid chain: Novobiocin biosynthesis protein H (600 aa).

The interval 505 to 526 (GGKTDRAGLPDPVKATQPAGLG) is disordered. Residues 526 to 600 (GPRTPAEKVL…QLAAIATLEE (75 aa)) enclose the Carrier domain. Position 561 is an O-(pantetheine 4'-phosphoryl)serine (Ser561).

The protein belongs to the ATP-dependent AMP-binding enzyme family.

It participates in antibiotic biosynthesis; novobiocin biosynthesis. In terms of biological role, together with NovI, involved in the formation of a beta-OH-Tyr intermediate in the novobiocin biosynthesis pathway, an aminocoumarin family antibiotic that targets bacterial DNA gyrases. The ATP-dependent AMP-binding region activates L-Tyr as L-tyrosyl-AMP and then transfers the L-tyrosyl group to the acyl carrier domain through thioester formation to form a tyrosyl-S intermediate that is covalently tethered to NovH (L-Tyr-S-NovH). In Streptomyces niveus (Streptomyces spheroides), this protein is Novobiocin biosynthesis protein H (novH).